The chain runs to 85 residues: UPF0213 protein NP_0776A (85 aa).

A GIY-YIG domain is found at A3–R78. Residues K58–S70 show a composition bias toward basic and acidic residues. A disordered region spans residues K58–G85.

It belongs to the UPF0213 family.

This Natronomonas pharaonis (strain ATCC 35678 / DSM 2160 / CIP 103997 / JCM 8858 / NBRC 14720 / NCIMB 2260 / Gabara) (Halobacterium pharaonis) protein is UPF0213 protein NP_0776A.